Reading from the N-terminus, the 198-residue chain is Large ribosomal subunit protein bL9 (198 aa).

A compositionally biased stretch (basic and acidic residues) spans 156-166 (RGEDISTRQED). Residues 156 to 198 (RGEDISTRQEDQDAAAEALAAAGEFFDPEAHNDGEQEEEAGDK) form a disordered region.

The protein belongs to the bacterial ribosomal protein bL9 family.

Its function is as follows. Binds to the 23S rRNA. The protein is Large ribosomal subunit protein bL9 of Rhodopseudomonas palustris (strain BisB18).